A 312-amino-acid polypeptide reads, in one-letter code: Malate dehydrogenase (312 aa).

Residues 7–13 (GAAGGIG) and Asp34 contribute to the NAD(+) site. Substrate-binding residues include Arg81 and Arg87. Residues Asn94 and 117–119 (ITN) each bind NAD(+). Substrate is bound by residues Asn119 and Arg153. Residue His177 is the Proton acceptor of the active site. Met227 contributes to the NAD(+) binding site.

The protein belongs to the LDH/MDH superfamily. MDH type 1 family. As to quaternary structure, homodimer.

The catalysed reaction is (S)-malate + NAD(+) = oxaloacetate + NADH + H(+). In terms of biological role, catalyzes the reversible oxidation of malate to oxaloacetate. The polypeptide is Malate dehydrogenase (Photorhabdus laumondii subsp. laumondii (strain DSM 15139 / CIP 105565 / TT01) (Photorhabdus luminescens subsp. laumondii)).